A 639-amino-acid chain; its full sequence is Protein sly1 homolog (639 aa).

4 consecutive repeat copies span residues 85–121 (DENLDRIQQDFSSGLYDVYHLNFLAPITRSKIENLAA), 203–245 (RNSA…FSFQ), 423–460 (LDLLRDGEFGQAEDKLRLYIIYFICAQQLPESEQERLK), and 464–500 (QAAGCDLTALAYVQRWKGIMNRSPSISQATQYEGGGT). Residues 85 to 500 (DENLDRIQQD…QATQYEGGGT (416 aa)) are 4 X approximate repeats.

This sequence belongs to the STXBP/unc-18/SEC1 family. In embryos, from stage 14, expression is seen in posterior midgut, esophagus and salivary glands. No expression is seen in larval imaginal disks.

The protein localises to the cytoplasm. It is found in the membrane. In terms of biological role, non-vital for development. The polypeptide is Protein sly1 homolog (Slh) (Drosophila melanogaster (Fruit fly)).